The primary structure comprises 248 residues: Biosynthetic peptidoglycan transglycosylase (248 aa).

Residues 20–42 (WLRWLMAAPLLFAAASVLQVLIL) form a helical membrane-spanning segment.

The protein belongs to the glycosyltransferase 51 family.

The protein resides in the cell inner membrane. The catalysed reaction is [GlcNAc-(1-&gt;4)-Mur2Ac(oyl-L-Ala-gamma-D-Glu-L-Lys-D-Ala-D-Ala)](n)-di-trans,octa-cis-undecaprenyl diphosphate + beta-D-GlcNAc-(1-&gt;4)-Mur2Ac(oyl-L-Ala-gamma-D-Glu-L-Lys-D-Ala-D-Ala)-di-trans,octa-cis-undecaprenyl diphosphate = [GlcNAc-(1-&gt;4)-Mur2Ac(oyl-L-Ala-gamma-D-Glu-L-Lys-D-Ala-D-Ala)](n+1)-di-trans,octa-cis-undecaprenyl diphosphate + di-trans,octa-cis-undecaprenyl diphosphate + H(+). The protein operates within cell wall biogenesis; peptidoglycan biosynthesis. Its function is as follows. Peptidoglycan polymerase that catalyzes glycan chain elongation from lipid-linked precursors. The chain is Biosynthetic peptidoglycan transglycosylase from Xanthomonas euvesicatoria pv. vesicatoria (strain 85-10) (Xanthomonas campestris pv. vesicatoria).